Reading from the N-terminus, the 337-residue chain is MVREKVTVSTRTLQWKCVESRTDSKRLYYGRFILSPLMKGQADTIGIAMRRALLGEIEGTCITRVKSEKVPHEYSTITGIQESVHEILMNLKEIVLRSNLYGTSEASICVKGPGYVTAQDIILPPYVEIVDNTQHIASLTEPIDFCIGLQIERNRGYLIKTPHNFQDGSYPIDAVFMPVRNANHSIHSYGNGNEKQEILFIEIWTNGSLTPKEALHDASRNLIDLFIPFLHMEEDNLYLQDNQHTVPLSPFTFHDKLAKLIKNKKKIALKSIFIDQSELSSRIYNCLKMSNIYTLLDLLNNSQEDLMKIEHFRSEDIKQILDILEKYFVIDLAKNKF.

An alpha N-terminal domain (alpha-NTD) region spans residues 1–233 (MVREKVTVST…DLFIPFLHME (233 aa)). The segment at 265 to 337 (KKIALKSIFI…FVIDLAKNKF (73 aa)) is alpha C-terminal domain (alpha-CTD).

This sequence belongs to the RNA polymerase alpha chain family. In terms of assembly, in plastids the minimal PEP RNA polymerase catalytic core is composed of four subunits: alpha, beta, beta', and beta''. When a (nuclear-encoded) sigma factor is associated with the core the holoenzyme is formed, which can initiate transcription.

The protein resides in the plastid. The protein localises to the chloroplast. The catalysed reaction is RNA(n) + a ribonucleoside 5'-triphosphate = RNA(n+1) + diphosphate. In terms of biological role, DNA-dependent RNA polymerase catalyzes the transcription of DNA into RNA using the four ribonucleoside triphosphates as substrates. This chain is DNA-directed RNA polymerase subunit alpha, found in Solanum lycopersicum (Tomato).